We begin with the raw amino-acid sequence, 550 residues long: Glutamine--tRNA ligase (550 aa).

Residues 34–44 carry the 'HIGH' region motif; that stretch reads PEPNGYLHLGH. ATP is bound by residues 35–37 and 41–47; these read EPN and HLGHAKS. The L-glutamine site is built by aspartate 67 and tyrosine 212. ATP is bound by residues threonine 231, 261–262, and 269–271; these read RL and LSK. The short motif at 268-272 is the 'KMSKS' region element; that stretch reads VLSKR.

Belongs to the class-I aminoacyl-tRNA synthetase family. Monomer.

Its subcellular location is the cytoplasm. The enzyme catalyses tRNA(Gln) + L-glutamine + ATP = L-glutaminyl-tRNA(Gln) + AMP + diphosphate. This chain is Glutamine--tRNA ligase, found in Buchnera aphidicola subsp. Baizongia pistaciae (strain Bp).